The primary structure comprises 421 residues: 5-hydroxytryptamine receptor 2 (421 aa).

The Extracellular segment spans residues 1-21; it reads MLCGRLRHTMNSTTCFFSHRT. Residue Asn-11 is glycosylated (N-linked (GlcNAc...) asparagine). A helical transmembrane segment spans residues 22-42; it reads VLIGIVGSLIIAVSVVGNVLV. Over 43–59 the chain is Cytoplasmic; it reads CLAIFTEPILSHSKSKF. Residues 60–79 form a helical membrane-spanning segment; sequence FIVSLAVADLLLALLVMTFA. Residues 80-95 lie on the Extracellular side of the membrane; the sequence is LVNSLYGYWLFGETFC. Cysteines 95 and 210 form a disulfide. The chain crosses the membrane as a helical span at residues 96–118; it reads FIWMSADVMCETASIFSICVISY. Residues 119–138 lie on the Cytoplasmic side of the membrane; it reads NRLKQVQKPLQYEEFMTTTR. Residues 139 to 160 traverse the membrane as a helical segment; that stretch reads ALLIIASLWICSFVVSFVPFFL. Topologically, residues 161–213 are extracellular; that stretch reads EWHELSMEEIKTIFKDLISDKVKTSDAHTFSFALEQTLGDNRTSNPKPECLFD. Residues 214 to 234 form a helical membrane-spanning segment; it reads VHFIYSVIYSLFCFYIPCTLM. At 235–274 the chain is on the cytoplasmic side; the sequence is LRNYLRLFLIAKKHHVRIKNLHRLHRNQGTQGSKAARTLT. The helical transmembrane segment at 275–295 threads the bilayer; that stretch reads IITGTFLACWLPFFIINPIEA. The Extracellular portion of the chain corresponds to 296-304; sequence VDEHLIPLE. The helical transmembrane segment at 305 to 325 threads the bilayer; that stretch reads CFMVTIWLGYFNSCVNPIIYG. Over 326–421 the chain is Cytoplasmic; that stretch reads TSNSKFRAAF…MLSESDTVFS (96 aa).

The protein belongs to the G-protein coupled receptor 1 family. In terms of tissue distribution, central nervous system.

The protein localises to the cell membrane. Its function is as follows. This is one of the several different receptors for 5-hydroxytryptamine (serotonin). 5-HT plays important roles in various behavioral and physiological processes in aplysia. These include feeding, locomotion, circadian rhythm, learning and memory, synaptic plasticity, and synaptic growth. This receptor is mediated by G proteins that stimulate phospholipase C. This Aplysia californica (California sea hare) protein is 5-hydroxytryptamine receptor 2 (5HTB2).